We begin with the raw amino-acid sequence, 764 residues long: 5-methyltetrahydropteroyltriglutamate--homocysteine methyltransferase (764 aa).

Residues 16–19 (RELK) and K117 each bind 5-methyltetrahydropteroyltri-L-glutamate. L-homocysteine is bound by residues 442–444 (IGS) and E495. Residues 442–444 (IGS) and E495 each bind L-methionine. 5-methyltetrahydropteroyltri-L-glutamate contacts are provided by residues 526 to 527 (RC) and W572. An L-homocysteine-binding site is contributed by D610. D610 contributes to the L-methionine binding site. Position 616 (E616) interacts with 5-methyltetrahydropteroyltri-L-glutamate. Zn(2+)-binding residues include H652, C654, and E676. H705 functions as the Proton donor in the catalytic mechanism. C737 provides a ligand contact to Zn(2+).

The protein belongs to the vitamin-B12 independent methionine synthase family. Zn(2+) is required as a cofactor.

The catalysed reaction is 5-methyltetrahydropteroyltri-L-glutamate + L-homocysteine = tetrahydropteroyltri-L-glutamate + L-methionine. It participates in amino-acid biosynthesis; L-methionine biosynthesis via de novo pathway; L-methionine from L-homocysteine (MetE route): step 1/1. Its function is as follows. Catalyzes the transfer of a methyl group from 5-methyltetrahydrofolate to homocysteine resulting in methionine formation. This is 5-methyltetrahydropteroyltriglutamate--homocysteine methyltransferase from Bordetella petrii (strain ATCC BAA-461 / DSM 12804 / CCUG 43448).